Here is a 516-residue protein sequence, read N- to C-terminus: UvrABC system protein C (516 aa).

Residues 9–87 (HLPGCYLFKD…IKKHWPRYNI (79 aa)) form the GIY-YIG domain. Residues 191–226 (GELIESMEKEMKKMAAKQMFEQAMALRDEISALEYL) form the UVR domain.

Belongs to the UvrC family. In terms of assembly, interacts with UvrB in an incision complex.

The protein localises to the cytoplasm. The UvrABC repair system catalyzes the recognition and processing of DNA lesions. UvrC both incises the 5' and 3' sides of the lesion. The N-terminal half is responsible for the 3' incision and the C-terminal half is responsible for the 5' incision. This Methanosarcina acetivorans (strain ATCC 35395 / DSM 2834 / JCM 12185 / C2A) protein is UvrABC system protein C.